We begin with the raw amino-acid sequence, 216 residues long: MEAVIFDMDGVLMDTEPLYFEAYRRVAESYGKPYTEDLHRRIMGVPEREGLPILMEALEIKDSLENFKKRVHEEKKRVFSELLKENPGVREALEFVKSKRIKLALATSTPQREALERLRRLDLEKYFDVMVFGDQVKNGKPDPEIYLLVLERLNVVPEKVVVFEDSKSGVEAAKSAGIERIYGVVHSLNDGKALLEAGAVALVKPEEILNVLKEVL.

D7 (nucleophile) is an active-site residue.

It belongs to the HAD-like hydrolase superfamily. The cofactor is Co(2+). Requires Mg(2+) as cofactor. It depends on Mn(2+) as a cofactor. Ni(2+) is required as a cofactor.

Functionally, displays high phosphatase activity toward erythrose 4-phosphate, fructose 6-phosphate, 2-deoxyglucose 6-phosphate, and mannose 6-phosphate. May have a role in the intracellular metabolism of many phosphorylated carbohydrates. This is Phosphorylated carbohydrates phosphatase TM_1254 from Thermotoga maritima (strain ATCC 43589 / DSM 3109 / JCM 10099 / NBRC 100826 / MSB8).